The sequence spans 295 residues: Methionine aminopeptidase (295 aa).

His-63 contacts substrate. A divalent metal cation-binding residues include Asp-83, Asp-94, and His-154. Residue His-162 coordinates substrate. 2 residues coordinate a divalent metal cation: Glu-188 and Glu-281.

This sequence belongs to the peptidase M24A family. Methionine aminopeptidase archaeal type 2 subfamily. In terms of assembly, monomer. Co(2+) is required as a cofactor. Requires Zn(2+) as cofactor. It depends on Mn(2+) as a cofactor. Fe(2+) serves as cofactor.

It catalyses the reaction Release of N-terminal amino acids, preferentially methionine, from peptides and arylamides.. In terms of biological role, removes the N-terminal methionine from nascent proteins. The N-terminal methionine is often cleaved when the second residue in the primary sequence is small and uncharged (Met-Ala-, Cys, Gly, Pro, Ser, Thr, or Val). This is Methionine aminopeptidase from Thermococcus kodakarensis (strain ATCC BAA-918 / JCM 12380 / KOD1) (Pyrococcus kodakaraensis (strain KOD1)).